We begin with the raw amino-acid sequence, 501 residues long: Lysine--tRNA ligase (501 aa).

Glutamate 411 and glutamate 418 together coordinate Mg(2+).

The protein belongs to the class-II aminoacyl-tRNA synthetase family. Homodimer. Mg(2+) is required as a cofactor.

It is found in the cytoplasm. The catalysed reaction is tRNA(Lys) + L-lysine + ATP = L-lysyl-tRNA(Lys) + AMP + diphosphate. This chain is Lysine--tRNA ligase, found in Clostridium perfringens (strain ATCC 13124 / DSM 756 / JCM 1290 / NCIMB 6125 / NCTC 8237 / Type A).